We begin with the raw amino-acid sequence, 350 residues long: Ketol-acid reductoisomerase (NADP(+)) 2 (350 aa).

Residues 3 to 183 (ATIWYEKDAD…GALRAGAIKT (181 aa)) enclose the KARI N-terminal Rossmann domain. NADP(+)-binding positions include 26–29 (YGSQ), Arg49, Ser52, Ser54, and 84–87 (DQYQ). The active site involves His109. Gly135 is a binding site for NADP(+). A KARI C-terminal knotted domain is found at 184–327 (TFTEETETDL…PKLRAMFSWN (144 aa)). 4 residues coordinate Mg(2+): Asp192, Glu196, Glu228, and Glu232. Substrate is bound at residue Ser253. A disordered region spans residues 331–350 (AKDKDETESFNGKIARTQVQ).

The protein belongs to the ketol-acid reductoisomerase family. Mg(2+) is required as a cofactor.

The enzyme catalyses (2R)-2,3-dihydroxy-3-methylbutanoate + NADP(+) = (2S)-2-acetolactate + NADPH + H(+). It carries out the reaction (2R,3R)-2,3-dihydroxy-3-methylpentanoate + NADP(+) = (S)-2-ethyl-2-hydroxy-3-oxobutanoate + NADPH + H(+). It functions in the pathway amino-acid biosynthesis; L-isoleucine biosynthesis; L-isoleucine from 2-oxobutanoate: step 2/4. Its pathway is amino-acid biosynthesis; L-valine biosynthesis; L-valine from pyruvate: step 2/4. Its function is as follows. Involved in the biosynthesis of branched-chain amino acids (BCAA). Catalyzes an alkyl-migration followed by a ketol-acid reduction of (S)-2-acetolactate (S2AL) to yield (R)-2,3-dihydroxy-isovalerate. In the isomerase reaction, S2AL is rearranged via a Mg-dependent methyl migration to produce 3-hydroxy-3-methyl-2-ketobutyrate (HMKB). In the reductase reaction, this 2-ketoacid undergoes a metal-dependent reduction by NADPH to yield (R)-2,3-dihydroxy-isovalerate. In Bifidobacterium longum (strain NCC 2705), this protein is Ketol-acid reductoisomerase (NADP(+)) 2.